Here is a 182-residue protein sequence, read N- to C-terminus: Large ribosomal subunit protein uL6 (182 aa).

It belongs to the universal ribosomal protein uL6 family. As to quaternary structure, part of the 50S ribosomal subunit.

Its function is as follows. This protein binds to the 23S rRNA, and is important in its secondary structure. It is located near the subunit interface in the base of the L7/L12 stalk, and near the tRNA binding site of the peptidyltransferase center. The sequence is that of Large ribosomal subunit protein uL6 from Caldicellulosiruptor bescii (strain ATCC BAA-1888 / DSM 6725 / KCTC 15123 / Z-1320) (Anaerocellum thermophilum).